We begin with the raw amino-acid sequence, 150 residues long: MTLQLNTIALLLVILLILGVLSNNSTITISAAVLLIMQQTFLSSHIPLLEKYGVKIGIIILTIGVLSPLVSGKIQLPNLSGFVSWKMALSISVGVLVAWLAGKGVPLMGEQPILVTGLLIGTIIGVAFLGGIPVGPLIAAGILALFLGKI.

4 consecutive transmembrane segments (helical) span residues 1–21 (MTLQ…LGVL), 52–72 (YGVK…LVSG), 81–101 (GFVS…AWLA), and 123–143 (IIGV…AGIL).

This sequence belongs to the UPF0756 family.

The protein resides in the cell membrane. The protein is UPF0756 membrane protein CGSHiEE_06715 of Haemophilus influenzae (strain PittEE).